Here is a 582-residue protein sequence, read N- to C-terminus: Leucine-rich repeat protein SHOC-2 (582 aa).

Composition is skewed to basic and acidic residues over residues 1-29 (MSSSLGKEKDSKEKDPKVPSAKEREKEAK) and 36-57 (KESKEKEPKTKGKDAKDGKKDS). Residues 1-88 (MSSSLGKEKD…PGTRKKSSNA (88 aa)) form a disordered region. Residues 63–66 (GVAF) carry the RVxF motif; important for interaction with PP1c motif. 20 LRR repeats span residues 101–122 (NSMRLDLSKRSIHILPSSIKEL), 124–145 (QLTELYLYSNKLQSLPAEVGCL), 147–169 (NLMTLALSENSLTSLPDSLDNLK), 170–191 (KLRMLDLRHNKLREIPSVVYRL), 193–214 (SLTTLYLRFNRITTVEKDIKNL), 216–237 (KLSMLSIRENKIKQLPAEIGEL), 239–260 (NLITLDVAHNQLEHLPKEIGNC), 262–283 (QITNLDLQHNELLDLPDTIGNL), 285–307 (SLSRLGLRYNRLSAIPRSLAKCS), 308–329 (ALEELNLENNNISTLPESLLSS), 332–353 (KLNSLTLARNCFQLYPVGGPSQ), 356–377 (TIYSLNMEHNRINKIPFGIFSR), 380–400 (VLSKLNMKDNQLTSLPLDFGT), 403–424 (SMVELNLATNQLTKIPEDVSGL), 426–448 (SLEVLILSNNLLKKLPHGLGNLR), 449–470 (KLRELDLEENKLESLPNEIAYL), 472–494 (DLQKLVLTNNQLTTLPRGIGHLT), 495–516 (NLTHLGLGENLLTHLPEEIGTL), 518–540 (NLEELYLNDNPNLHSLPFELALC), and 542–563 (KLSIMSIENCPLSHLPPQIVAG).

This sequence belongs to the SHOC2 family. In terms of assembly, component of the SHOC2-MRAS-PP1c (SMP) complex consisting of SHOC2, GTP-bound M-Ras/MRAS and the catalytic subunit of protein phosphatase 1 (either PPP1CA, PPP1CB or PPP1CC). SHOC2 and PP1c preferably bind M-Ras/MRAS, but they also bind K-Ras/KRAS, N-Ras/NRAS and H-Ras/HRAS; these interactions are GTP-dependent and both SHOC2 and PP1c are required to form a stable complex. Interacts with PP1c in the absence of Ras GTPases. Interacts with M-Ras/MRAS and RAF1. Interacts with ERBIN; disrupts the interaction with RAF1 and Ras, preventing the activation of the Ras signaling pathway. Interacts with LZTR1.

The protein localises to the cytoplasm. It localises to the nucleus. Core component of the SHOC2-MRAS-PP1c (SMP) holophosphatase complex that regulates activation of the MAPK pathway. Acts as a scaffolding protein in the SMP complex. The SMP complex specifically dephosphorylates the inhibitory phosphorylation at 'Ser-259' of RAF1 kinase, 'Ser-365' of BRAF kinase and 'Ser-214' of ARAF kinase, stimulating their kinase activities. The SMP complex enhances the dephosphorylation activity and substrate specificity of PP1c. The protein is Leucine-rich repeat protein SHOC-2 (SHOC2) of Homo sapiens (Human).